Consider the following 358-residue polypeptide: MTHQIAVLPGDGIGPEIVEQAERVLKALDLPLELRQAPVGGAAFDQFEHPLPPATLELAQGSHAVLFGAVGDWKYDTLPREFRPEQAILGLRKALGLFANLRPAILYPELASASSLKPEIVSGLDILIIRELTGDIYFGTPRGVRTAADGAFAGEREGYDTMRYAESEVRRIARIGFESARKRNKKLCSVDKANVLETSQFWRDLVIEVSRDYPDVELSHMYVDNAAMQLVRNPRQFDVIVTGNLFGDILSDEAAMLTGSIGMLPSASLNAAGQGLYEPSHGSAPDIAGQGIANPLATILSAAMLLRYSLNLAPQADRVEAAVRKVLADGLRTADIHEAGTTKVSTSQMGDAVLKALG.

Arg-92, Arg-102, Arg-130, and Asp-224 together coordinate substrate. Residues Asp-224, Asp-248, and Asp-252 each contribute to the Mg(2+) site. 282-294 (GSAPDIAGQGIAN) is a binding site for NAD(+).

This sequence belongs to the isocitrate and isopropylmalate dehydrogenases family. LeuB type 1 subfamily. As to quaternary structure, homodimer. Mg(2+) serves as cofactor. It depends on Mn(2+) as a cofactor.

The protein localises to the cytoplasm. The catalysed reaction is (2R,3S)-3-isopropylmalate + NAD(+) = 4-methyl-2-oxopentanoate + CO2 + NADH. It participates in amino-acid biosynthesis; L-leucine biosynthesis; L-leucine from 3-methyl-2-oxobutanoate: step 3/4. Functionally, catalyzes the oxidation of 3-carboxy-2-hydroxy-4-methylpentanoate (3-isopropylmalate) to 3-carboxy-4-methyl-2-oxopentanoate. The product decarboxylates to 4-methyl-2 oxopentanoate. The sequence is that of 3-isopropylmalate dehydrogenase from Bordetella parapertussis (strain 12822 / ATCC BAA-587 / NCTC 13253).